The sequence spans 466 residues: Probable aminotransferase Rv3329 (466 aa).

An N6-(pyridoxal phosphate)lysine modification is found at Lys294.

The protein belongs to the class-III pyridoxal-phosphate-dependent aminotransferase family. Pyridoxal 5'-phosphate is required as a cofactor.

Probable aminotransferase. In Mycobacterium tuberculosis (strain ATCC 25618 / H37Rv), this protein is Probable aminotransferase Rv3329.